We begin with the raw amino-acid sequence, 284 residues long: NAD(P)H-hydrate epimerase (284 aa).

Residues 1 to 55 (MSGLRTLLGLGLLVSSSRFPRVVARGGPRCPGPAWWAARPMHLGDSTMAGGTVKY) constitute a mitochondrion transit peptide. Positions 61–271 (AQAVDEELFN…DLEKKYQLNL (211 aa)) constitute a YjeF N-terminal domain. Residue 115 to 119 (NNGGD) participates in (6S)-NADPHX binding. K(+) is bound at residue asparagine 116. Lysine 140 carries the post-translational modification N6-succinyllysine. Residue aspartate 181 participates in K(+) binding. (6S)-NADPHX is bound by residues 185 to 191 (GFSFKGA) and aspartate 214. Serine 217 contributes to the K(+) binding site.

It belongs to the NnrE/AIBP family. As to quaternary structure, homodimer. Interacts with APOA1 and APOA2. Requires K(+) as cofactor. Post-translationally, undergoes physiological phosphorylation during sperm capacitation, downstream to PKA activation.

The protein resides in the mitochondrion. The protein localises to the secreted. The enzyme catalyses (6R)-NADHX = (6S)-NADHX. It catalyses the reaction (6R)-NADPHX = (6S)-NADPHX. In terms of biological role, catalyzes the epimerization of the S- and R-forms of NAD(P)HX, a damaged form of NAD(P)H that is a result of enzymatic or heat-dependent hydration. This is a prerequisite for the S-specific NAD(P)H-hydrate dehydratase to allow the repair of both epimers of NAD(P)HX. Accelerates cholesterol efflux from endothelial cells to high-density lipoprotein (HDL) and thereby regulates angiogenesis. This Monodelphis domestica (Gray short-tailed opossum) protein is NAD(P)H-hydrate epimerase.